The following is a 910-amino-acid chain: Leucine--tRNA ligase (910 aa).

Residues 50 to 60 (PYTNGSLHVGH) carry the 'HIGH' region motif. The 'KMSKS' region signature appears at 611 to 615 (KISKS). K614 serves as a coordination point for ATP.

This sequence belongs to the class-I aminoacyl-tRNA synthetase family.

The protein localises to the cytoplasm. It catalyses the reaction tRNA(Leu) + L-leucine + ATP = L-leucyl-tRNA(Leu) + AMP + diphosphate. The protein is Leucine--tRNA ligase of Thermoplasma volcanium (strain ATCC 51530 / DSM 4299 / JCM 9571 / NBRC 15438 / GSS1).